Here is a 121-residue protein sequence, read N- to C-terminus: Small ribosomal subunit protein uS13 (121 aa).

The interval 93–121 is disordered; it reads RHLPVRGQNTKNNARTRKGPAVSIAGKKK.

This sequence belongs to the universal ribosomal protein uS13 family. In terms of assembly, part of the 30S ribosomal subunit. Forms a loose heterodimer with protein S19. Forms two bridges to the 50S subunit in the 70S ribosome.

Its function is as follows. Located at the top of the head of the 30S subunit, it contacts several helices of the 16S rRNA. In the 70S ribosome it contacts the 23S rRNA (bridge B1a) and protein L5 of the 50S subunit (bridge B1b), connecting the 2 subunits; these bridges are implicated in subunit movement. Contacts the tRNAs in the A and P-sites. The polypeptide is Small ribosomal subunit protein uS13 (Ligilactobacillus salivarius (strain UCC118) (Lactobacillus salivarius)).